The primary structure comprises 557 residues: Anthrax toxin receptor-like (557 aa).

A signal peptide spans 1 to 25; it reads MRSHGRWGPCFLLFLLLLPPPLFRA. Over 26–345 the chain is Extracellular; it reads GSLRYHGPGW…KSNVSVTSST (320 aa). In terms of domain architecture, VWFA spans 74 to 244; the sequence is DLYFILDKSG…KAMRDTVDAL (171 aa). Residues serine 82, serine 84, and threonine 148 each contribute to the a divalent metal cation site. The helical transmembrane segment at 346–366 threads the bilayer; the sequence is CGIFSNWLYFLLPLLLLPLLL. Topologically, residues 367–557 are cytoplasmic; that stretch reads CCLWRLCRKK…PTSKAPNTQD (191 aa). Disordered stretches follow at residues 380–411 and 497–557; these read EPPP…LPPP and ESPS…NTQD. Over residues 386–395 the composition is skewed to basic and acidic residues; the sequence is KPEKEPEQEK. Pro residues predominate over residues 396-411; the sequence is PPPPPPPSPPPPLPPP. Positions 534-557 are enriched in polar residues; the sequence is GTLQNPLCPSLPRSPTSKAPNTQD.

Belongs to the ATR family.

The protein localises to the membrane. In Macaca fascicularis (Crab-eating macaque), this protein is Anthrax toxin receptor-like (ANTXRL).